Reading from the N-terminus, the 208-residue chain is Virion protein US10 homolog (208 aa).

Residues 17–61 are disordered; the sequence is ARGAKLSPGQHPRPSHAVRGRTAPGTRSSRRRTCEDGTSGPRDPR. A zinc finger spans residues 167–179; that stretch reads CAFWCCLAHAATC.

It belongs to the herpesviridae US10 family. In terms of processing, phosphorylated.

The protein resides in the virion tegument. Its subcellular location is the host nucleus matrix. This Homo sapiens (Human) protein is Virion protein US10 homolog.